A 725-amino-acid chain; its full sequence is Catalase B (725 aa).

An N-terminal signal peptide occupies residues 1-15 (MRALSLASLIGIASA). Residues 16 to 27 (ACPYMTGELERR) constitute a propeptide that is removed on maturation. The N-linked (GlcNAc...) asparagine glycan is linked to Asn50. Residue His101 is part of the active site. N-linked (GlcNAc...) asparagine glycosylation occurs at Asn119. Asn174 is an active-site residue. Tyr388 is a binding site for heme. N-linked (GlcNAc...) asparagine glycans are attached at residues Asn447, Asn550, and Asn645.

It belongs to the catalase family. As to quaternary structure, homotetramer. The cofactor is heme.

Its subcellular location is the secreted. It carries out the reaction 2 H2O2 = O2 + 2 H2O. In terms of biological role, occurs in almost all aerobically respiring organisms and serves to protect cells from the toxic effects of hydrogen peroxide through its degradation into water and oxygen. The protein is Catalase B (catB) of Aspergillus oryzae (strain ATCC 42149 / RIB 40) (Yellow koji mold).